The primary structure comprises 1145 residues: MVSRPAMSPVSPVWPRKPNLWAFWVLRLVLLLSLKSWAEDALQHCTWLLVLNKFEKVGLHLSKDRFQDHEPIDTVAKVFQKLTDSPIDPSENYLSFPYYLQINFSCPGQNIEELARKGHLMGMKPMVQINYMYSVNFYRWEMENVQILMEAAPMRSTGYCPAEAMCVLNWYTPMPFKNGSVVSSVDIYTNGIGPFVSKKRFYVNMNGFLKRDASGKSLFAIGYESLVLKSSHFRLSKSRPLWYTVNHAPVFILGGFYDEKSILFSDSNFQDYVLLELSIDSCWVGSFYCPILGFSATIHDAIATESTLFIRQNQLVYYFTGTYITLFDKSHGSSRWVRVLPSECIKRLCPVYASGNGSEYVLALTTGKNEGYIHIGTITDGLVSFEMVPDGWSVCEKLPGKNCSIDWATYIADERNLLLLVKIDSGQFYLVNFNTEFKTLNILYKIPEFIPEAKELDFLVLLDTVTYTNTPMTPKGLFFNTLNNMLYIWGNFILQSYNREEFIFLADFPKESTIKYMVNSFKGQMAVVTENEEIWYFLEGGYDVYQVVPSQGWETYHNLQKMQKSSFHSEDESLVSLFFEDGKLFQLVYLFDVGKERLVKRLLPVGTLMEYNLPKPFTVVNQGNYQAISFTHTCPFKEIHLIDVPKKHHASRTESYVALPPLVSESLGFHNNNTLAVYQGLVYYLLWLHSKYDKPYADPVHDPTWRWWQHKTKDKDYFFYLFSNRLAAEGIYINMNAYQKLYNMSGDYGIPDLFFLDKGNWFTITVVLLSHQDTFTSSDSQGPTINVDKKLAIAVTIADPECLSVTVTQDVLLNRNAVINKIKVIDKKRCSEQGMIGRNIKKTSMMLKVLGAPGNCIQRTYLGGIIQGFKVVPIFIGCPPGKRLAFDVSYTIMHSEEINKHYFDCVIKDAEMPCFLFRDLFQPFFLVQDLVTGDSGSFLGSYVLKVVGGGRTLNTIRDYTEEEIFRYNSPLDTTNSLIWKTKVERTTEDKKFYIMSHESPGVEWLCLENSPCYDIIPQSIYPPEFFFKLLVSNRGVDNSTYCDYKLTFIVHIHGLPLSSKRTSFIVMVSTSFFIALVVFYILFCLVWPHIVKAWVSLRWRINNIMASESYYTYASSTAGFSLQSHSFEGPSRAGSKEDNVQAKTA.

Residues 1 to 38 (MVSRPAMSPVSPVWPRKPNLWAFWVLRLVLLLSLKSWA) form the signal peptide. Topologically, residues 39–1061 (EDALQHCTWL…IHGLPLSSKR (1023 aa)) are extracellular. Cystine bridges form between cysteine 45–cysteine 106 and cysteine 160–cysteine 166. An N-linked (GlcNAc...) asparagine glycan is attached at asparagine 103. Asparagine 178 is a glycosylation site (N-linked (GlcNAc...) asparagine). Residues cysteine 289 and cysteine 344 are joined by a disulfide bond. Residues asparagine 356, asparagine 402, asparagine 672, and asparagine 743 are each glycosylated (N-linked (GlcNAc...) asparagine). 6 cysteine pairs are disulfide-bonded: cysteine 395/cysteine 403, cysteine 634/cysteine 856, cysteine 802/cysteine 830, cysteine 878/cysteine 1042, cysteine 905/cysteine 914, and cysteine 1006/cysteine 1012. The N-linked (GlcNAc...) asparagine glycan is linked to asparagine 1038. The helical transmembrane segment at 1062–1083 (TSFIVMVSTSFFIALVVFYILF) threads the bilayer. Residues 1084-1145 (CLVWPHIVKA…KEDNVQAKTA (62 aa)) lie on the Cytoplasmic side of the membrane.

This sequence belongs to the CATSPERG family. In terms of assembly, component of the CatSper complex or CatSpermasome composed of the core pore-forming members CATSPER1, CATSPER2, CATSPER3 and CATSPER4 as well as auxiliary members CATSPERB, CATSPERG2, CATSPERD, CATSPERE, CATSPERZ, C2CD6/CATSPERT, SLCO6C1, TMEM249, TMEM262 and EFCAB9. HSPA1 may be an additional auxiliary complex member. The core complex members CATSPER1, CATSPER2, CATSPER3 and CATSPER4 form a heterotetrameric channel. The auxiliary CATSPERB, CATSPERG2, CATSPERD and CATSPERE subunits form a pavilion-like structure over the pore which stabilizes the complex through interactions with CATSPER4, CATSPER3, CATSPER1 and CATSPER2 respectively. SLCO6C1 interacts with CATSPERE and TMEM262/CATSPERH interacts with CATSPERB, further stabilizing the complex. C2CD6/CATSPERT interacts at least with CATSPERD and is required for targeting the CatSper complex in the flagellar membrane. As to expression, testis-specific. Specifically expressed in the principal piece of the sperm tail (at protein level). Expressed in spermatocytes and spermatids within the seminiferous tubule but not in interstitial cells.

The protein localises to the cell projection. It localises to the cilium. Its subcellular location is the flagellum membrane. In terms of biological role, auxiliary component of the CatSper complex, a complex involved in sperm cell hyperactivation. Sperm cell hyperactivation is needed for sperm motility which is essential late in the preparation of sperm for fertilization. The polypeptide is Cation channel sperm-associated auxiliary subunit gamma 2 (Mus musculus (Mouse)).